The following is a 225-amino-acid chain: Cytidylate kinase (225 aa).

11-19 lines the ATP pocket; sequence GPSGAGKGT.

This sequence belongs to the cytidylate kinase family. Type 1 subfamily.

It localises to the cytoplasm. The enzyme catalyses CMP + ATP = CDP + ADP. It catalyses the reaction dCMP + ATP = dCDP + ADP. This Mannheimia succiniciproducens (strain KCTC 0769BP / MBEL55E) protein is Cytidylate kinase.